Reading from the N-terminus, the 103-residue chain is Large ribosomal subunit protein bL21 (103 aa).

The protein belongs to the bacterial ribosomal protein bL21 family. Part of the 50S ribosomal subunit. Contacts protein L20.

Functionally, this protein binds to 23S rRNA in the presence of protein L20. In Rhodococcus erythropolis (strain PR4 / NBRC 100887), this protein is Large ribosomal subunit protein bL21.